We begin with the raw amino-acid sequence, 147 residues long: Hemoglobin subunit epsilon-Y2 (147 aa).

One can recognise a Globin domain in the interval Asn3 to His147. Ser51 is modified (phosphoserine). Residues His64 and His93 each coordinate heme b.

It belongs to the globin family. In terms of tissue distribution, high expression in yolk sac blood islands, fetal liver, and embryonic erythrocytes. Very low levels in adult liver and spleen.

Functionally, hemoglobin epsilon chain is a beta-type chain found in early embryos. In Mus musculus (Mouse), this protein is Hemoglobin subunit epsilon-Y2 (Hbb-y).